The following is a 349-amino-acid chain: 4-hydroxy-3-methylbut-2-en-1-yl diphosphate synthase (flavodoxin) (349 aa).

[4Fe-4S] cluster contacts are provided by C264, C267, C299, and E306.

This sequence belongs to the IspG family. Requires [4Fe-4S] cluster as cofactor.

The enzyme catalyses (2E)-4-hydroxy-3-methylbut-2-enyl diphosphate + oxidized [flavodoxin] + H2O + 2 H(+) = 2-C-methyl-D-erythritol 2,4-cyclic diphosphate + reduced [flavodoxin]. Its pathway is isoprenoid biosynthesis; isopentenyl diphosphate biosynthesis via DXP pathway; isopentenyl diphosphate from 1-deoxy-D-xylulose 5-phosphate: step 5/6. Functionally, converts 2C-methyl-D-erythritol 2,4-cyclodiphosphate (ME-2,4cPP) into 1-hydroxy-2-methyl-2-(E)-butenyl 4-diphosphate. This chain is 4-hydroxy-3-methylbut-2-en-1-yl diphosphate synthase (flavodoxin), found in Clostridium acetobutylicum (strain ATCC 824 / DSM 792 / JCM 1419 / IAM 19013 / LMG 5710 / NBRC 13948 / NRRL B-527 / VKM B-1787 / 2291 / W).